Consider the following 445-residue polypeptide: Arginine biosynthesis bifunctional protein ArgJ, mitochondrial (445 aa).

Thr-189, Lys-215, Thr-226, Glu-312, Asn-440, and Ser-445 together coordinate substrate. The active-site Nucleophile is Thr-226.

This sequence belongs to the ArgJ family. As to quaternary structure, heterodimer of an alpha and a beta chain. The alpha and beta chains are autoproteolytically processed from a single precursor protein within the mitochondrion.

The protein localises to the mitochondrion matrix. The enzyme catalyses N(2)-acetyl-L-ornithine + L-glutamate = N-acetyl-L-glutamate + L-ornithine. The catalysed reaction is L-glutamate + acetyl-CoA = N-acetyl-L-glutamate + CoA + H(+). The protein operates within amino-acid biosynthesis; L-arginine biosynthesis; L-ornithine and N-acetyl-L-glutamate from L-glutamate and N(2)-acetyl-L-ornithine (cyclic): step 1/1. It functions in the pathway amino-acid biosynthesis; L-arginine biosynthesis; N(2)-acetyl-L-ornithine from L-glutamate: step 1/4. Functionally, catalyzes two activities which are involved in the cyclic version of arginine biosynthesis: the synthesis of acetylglutamate from glutamate and acetyl-CoA, and of ornithine by transacetylation between acetylornithine and glutamate. The sequence is that of Arginine biosynthesis bifunctional protein ArgJ, mitochondrial from Schizosaccharomyces pombe (strain 972 / ATCC 24843) (Fission yeast).